Reading from the N-terminus, the 335-residue chain is Protein STRICTOSIDINE SYNTHASE-LIKE 12 (335 aa).

Positions methionine 1–serine 22 are cleaved as a signal peptide. Residue asparagine 80 is glycosylated (N-linked (GlcNAc...) asparagine).

This sequence belongs to the strictosidine synthase family.

It localises to the vacuole. The enzyme catalyses 3alpha(S)-strictosidine + H2O = secologanin + tryptamine. Its pathway is alkaloid biosynthesis; 3alpha(S)-strictosidine biosynthesis; 3alpha(S)-strictosidine from secologanin and tryptamine: step 1/1. Its function is as follows. Catalyzes the stereospecific condensation of tryptamine with secologanin to form strictosidine, the key intermediate of indole alkaloid biosynthesis. In Arabidopsis thaliana (Mouse-ear cress), this protein is Protein STRICTOSIDINE SYNTHASE-LIKE 12.